We begin with the raw amino-acid sequence, 349 residues long: tRNA N6-adenosine threonylcarbamoyltransferase (349 aa).

Fe cation-binding residues include His-113 and His-117. Substrate is bound by residues 135–139, Asp-169, Gly-182, Asp-186, and Asn-281; that span reads LVSGG. Asp-309 contributes to the Fe cation binding site.

Belongs to the KAE1 / TsaD family. Fe(2+) is required as a cofactor.

Its subcellular location is the cytoplasm. The catalysed reaction is L-threonylcarbamoyladenylate + adenosine(37) in tRNA = N(6)-L-threonylcarbamoyladenosine(37) in tRNA + AMP + H(+). Functionally, required for the formation of a threonylcarbamoyl group on adenosine at position 37 (t(6)A37) in tRNAs that read codons beginning with adenine. Is involved in the transfer of the threonylcarbamoyl moiety of threonylcarbamoyl-AMP (TC-AMP) to the N6 group of A37, together with TsaE and TsaB. TsaD likely plays a direct catalytic role in this reaction. The chain is tRNA N6-adenosine threonylcarbamoyltransferase from Corynebacterium aurimucosum (strain ATCC 700975 / DSM 44827 / CIP 107346 / CN-1) (Corynebacterium nigricans).